Here is a 274-residue protein sequence, read N- to C-terminus: Probable endonuclease LCL3 (274 aa).

The chain crosses the membrane as a helical span at residues 15–32 (AVLSIILTGSTLTLIYTY). Residues 53–261 (HWLYGKVTSV…RSRKKGLWIQ (209 aa)) enclose the TNase-like domain. The active site involves Arg151. Asp156 is a Ca(2+) binding site. Active-site residues include Glu159 and Arg199.

Belongs to the LCL3 family.

The protein localises to the mitochondrion. Its subcellular location is the membrane. This chain is Probable endonuclease LCL3 (LCL3), found in Saccharomyces cerevisiae (strain Lalvin EC1118 / Prise de mousse) (Baker's yeast).